A 274-amino-acid polypeptide reads, in one-letter code: Urease accessory protein UreD 2 (274 aa).

This sequence belongs to the UreD family. In terms of assembly, ureD, UreF and UreG form a complex that acts as a GTP-hydrolysis-dependent molecular chaperone, activating the urease apoprotein by helping to assemble the nickel containing metallocenter of UreC. The UreE protein probably delivers the nickel.

The protein resides in the cytoplasm. Its function is as follows. Required for maturation of urease via the functional incorporation of the urease nickel metallocenter. This is Urease accessory protein UreD 2 from Brucella anthropi (strain ATCC 49188 / DSM 6882 / CCUG 24695 / JCM 21032 / LMG 3331 / NBRC 15819 / NCTC 12168 / Alc 37) (Ochrobactrum anthropi).